The sequence spans 339 residues: Heat-inducible transcription repressor HrcA (339 aa).

This sequence belongs to the HrcA family.

In terms of biological role, negative regulator of class I heat shock genes (grpE-dnaK-dnaJ and groELS operons). Prevents heat-shock induction of these operons. The chain is Heat-inducible transcription repressor HrcA from Paraburkholderia xenovorans (strain LB400).